A 342-amino-acid chain; its full sequence is Holliday junction branch migration complex subunit RuvB (342 aa).

Positions methionine 1–tyrosine 179 are large ATPase domain (RuvB-L). Residues isoleucine 18, arginine 19, glycine 60, lysine 63, threonine 64, threonine 65, glutamate 126–phenylalanine 128, arginine 169, tyrosine 179, and arginine 216 each bind ATP. A Mg(2+)-binding site is contributed by threonine 64. Positions asparagine 180–glutamate 250 are small ATPAse domain (RuvB-S). Positions arginine 253–glutamate 342 are head domain (RuvB-H). 3 residues coordinate DNA: arginine 289, arginine 308, and arginine 313.

This sequence belongs to the RuvB family. In terms of assembly, homohexamer. Forms an RuvA(8)-RuvB(12)-Holliday junction (HJ) complex. HJ DNA is sandwiched between 2 RuvA tetramers; dsDNA enters through RuvA and exits via RuvB. An RuvB hexamer assembles on each DNA strand where it exits the tetramer. Each RuvB hexamer is contacted by two RuvA subunits (via domain III) on 2 adjacent RuvB subunits; this complex drives branch migration. In the full resolvosome a probable DNA-RuvA(4)-RuvB(12)-RuvC(2) complex forms which resolves the HJ.

Its subcellular location is the cytoplasm. It catalyses the reaction ATP + H2O = ADP + phosphate + H(+). The RuvA-RuvB-RuvC complex processes Holliday junction (HJ) DNA during genetic recombination and DNA repair, while the RuvA-RuvB complex plays an important role in the rescue of blocked DNA replication forks via replication fork reversal (RFR). RuvA specifically binds to HJ cruciform DNA, conferring on it an open structure. The RuvB hexamer acts as an ATP-dependent pump, pulling dsDNA into and through the RuvAB complex. RuvB forms 2 homohexamers on either side of HJ DNA bound by 1 or 2 RuvA tetramers; 4 subunits per hexamer contact DNA at a time. Coordinated motions by a converter formed by DNA-disengaged RuvB subunits stimulates ATP hydrolysis and nucleotide exchange. Immobilization of the converter enables RuvB to convert the ATP-contained energy into a lever motion, pulling 2 nucleotides of DNA out of the RuvA tetramer per ATP hydrolyzed, thus driving DNA branch migration. The RuvB motors rotate together with the DNA substrate, which together with the progressing nucleotide cycle form the mechanistic basis for DNA recombination by continuous HJ branch migration. Branch migration allows RuvC to scan DNA until it finds its consensus sequence, where it cleaves and resolves cruciform DNA. This is Holliday junction branch migration complex subunit RuvB from Rickettsia rickettsii (strain Sheila Smith).